The primary structure comprises 234 residues: Elongation factor Tu, chloroplastic (234 aa).

The 125-residue stretch at Lys-1–Glu-125 folds into the tr-type G domain. Residue Asn-47–Asp-50 coordinates GTP.

This sequence belongs to the TRAFAC class translation factor GTPase superfamily. Classic translation factor GTPase family. EF-Tu/EF-1A subfamily.

The protein localises to the plastid. It is found in the chloroplast. It catalyses the reaction GTP + H2O = GDP + phosphate + H(+). Functionally, GTP hydrolase that promotes the GTP-dependent binding of aminoacyl-tRNA to the A-site of ribosomes during protein biosynthesis. This chain is Elongation factor Tu, chloroplastic (tufA), found in Pandorina morum (Freshwater green alga).